Here is a 233-residue protein sequence, read N- to C-terminus: Probable septum site-determining protein MinC (233 aa).

The tract at residues glutamine 104 to proline 124 is disordered.

Belongs to the MinC family. Interacts with MinD and FtsZ.

In terms of biological role, cell division inhibitor that blocks the formation of polar Z ring septums. Rapidly oscillates between the poles of the cell to destabilize FtsZ filaments that have formed before they mature into polar Z rings. Prevents FtsZ polymerization. This Serratia proteamaculans (strain 568) protein is Probable septum site-determining protein MinC.